Reading from the N-terminus, the 158-residue chain is Secreted RxLR effector protein 2 (158 aa).

Residues M1 to A21 form the signal peptide. Residues R54 to R75 carry the RxLR-dEER motif.

It belongs to the RxLR effector family.

It localises to the secreted. The protein resides in the host cell. Functionally, secreted effector that completely suppresses elicitor-induced cell death in host and enhances virulence of P.parasitica. This Phytophthora nicotianae (Potato buckeye rot agent) protein is Secreted RxLR effector protein 2.